A 205-amino-acid polypeptide reads, in one-letter code: Ras-related and estrogen-regulated growth inhibitor-like protein (205 aa).

The tract at residues 1–205 is small GTPase-like; the sequence is MSNFLHLKYN…NVFGKRRKSV (205 aa). GTP contacts are provided by residues 11–18, 58–64, and 123–126; these read EKSVSVTK, DPCSQTQ, and NKRD.

This sequence belongs to the small GTPase superfamily. Ras family.

It carries out the reaction GTP + H2O = GDP + phosphate + H(+). Its function is as follows. Binds GDP/GTP and may possess intrinsic GTPase activity. The sequence is that of Ras-related and estrogen-regulated growth inhibitor-like protein (RERGL) from Homo sapiens (Human).